Reading from the N-terminus, the 944-residue chain is Valine--tRNA ligase (944 aa).

Positions 43-53 match the 'HIGH' region motif; that stretch reads PNVTGTLHMGH. The 'KMSKS' region signature appears at 550–554; that stretch reads KMSKS. Lys553 is an ATP binding site. Residues 878 to 944 adopt a coiled-coil conformation; sequence LVDMDAERTR…TGLREQRAKL (67 aa).

This sequence belongs to the class-I aminoacyl-tRNA synthetase family. ValS type 1 subfamily. As to quaternary structure, monomer.

It localises to the cytoplasm. It catalyses the reaction tRNA(Val) + L-valine + ATP = L-valyl-tRNA(Val) + AMP + diphosphate. In terms of biological role, catalyzes the attachment of valine to tRNA(Val). As ValRS can inadvertently accommodate and process structurally similar amino acids such as threonine, to avoid such errors, it has a 'posttransfer' editing activity that hydrolyzes mischarged Thr-tRNA(Val) in a tRNA-dependent manner. This Xanthomonas campestris pv. campestris (strain B100) protein is Valine--tRNA ligase.